A 318-amino-acid polypeptide reads, in one-letter code: Homoserine kinase (318 aa).

ATP is bound at residue proline 97–cysteine 107.

Belongs to the GHMP kinase family. Homoserine kinase subfamily.

The protein resides in the cytoplasm. It carries out the reaction L-homoserine + ATP = O-phospho-L-homoserine + ADP + H(+). Its pathway is amino-acid biosynthesis; L-threonine biosynthesis; L-threonine from L-aspartate: step 4/5. In terms of biological role, catalyzes the ATP-dependent phosphorylation of L-homoserine to L-homoserine phosphate. This is Homoserine kinase from Vibrio parahaemolyticus serotype O3:K6 (strain RIMD 2210633).